Consider the following 354-residue polypeptide: MSLSPKHTTPFSVSDILSPIEETYKKFGGVMDGAPPGLGAPLGAAAYRAPPSGPSSQAAAVAAGMQPPHAMAGHNAAAAAAAAAAAAAAAATYHMPPGVSQFPHSAMGSYCNGGLGNMGELPAYTDGMRGGAAAAATGWYGANTDPRYSSISRFMGPSAGVNVAGMGSLTGIADAAKSLAPLHAAAPRRKRRVLFSQAQVYELERRFKQQKYLSAPEREHLASMIHLTPTQVKIWFQNHRYKMKRQAKDKAAQQLQQEGGLGPPPPPPPPSPRRVAVPVLVKDGKPCQNGAGTPTPGQGGQQPQAPTPAPELEELSPSPPALHGPGGGLAALDAATGDYGGGVLGANLLYGRTW.

Positions 188 to 247 form a DNA-binding region, homeobox; that stretch reads RRKRRVLFSQAQVYELERRFKQQKYLSAPEREHLASMIHLTPTQVKIWFQNHRYKMKRQA. The tract at residues 245 to 329 is disordered; sequence RQAKDKAAQQ…PALHGPGGGL (85 aa). Residues 262–272 show a composition bias toward pro residues; it reads GPPPPPPPPSP. Low complexity predominate over residues 290–304; sequence GAGTPTPGQGGQQPQ.

It belongs to the NK-2 homeobox family. In terms of tissue distribution, in the embryo it is detected in the posterior hypothalamus and later in the head. In the adult it is detected only in testis.

The protein resides in the nucleus. Functionally, probable transcription factor. The chain is Homeobox protein Nkx-2.4 (Nkx2-4) from Mus musculus (Mouse).